Consider the following 198-residue polypeptide: Large ribosomal subunit protein bL25 (198 aa).

This sequence belongs to the bacterial ribosomal protein bL25 family. CTC subfamily. Part of the 50S ribosomal subunit; part of the 5S rRNA/L5/L18/L25 subcomplex. Contacts the 5S rRNA. Binds to the 5S rRNA independently of L5 and L18.

This is one of the proteins that binds to the 5S RNA in the ribosome where it forms part of the central protuberance. The chain is Large ribosomal subunit protein bL25 from Nitrosomonas europaea (strain ATCC 19718 / CIP 103999 / KCTC 2705 / NBRC 14298).